The following is a 491-amino-acid chain: MANYFNTLNLRQQLAQLGKCRFMGRDEFADGASYLQGKKVVIVGCGAQGLNQGLNMRDSGLDISYALRKEAIAEKRASWRKATENGFKVGTYEELIPQADLVINLTPDKQHSDVVRTVQPLMKDGAALGYSHGFNIVEVGEQIRKDITVVMVAPKCPGTEVREEYKRGFGVPTLIAVHPENDPKGEGMAIAKAWAAATGGHRAGVLESSFVAEVKSDLMGEQTILCGMLQAGSLLCFDKLVEEGTDPAYAEKLIQFGWETITEALKQGGITLMMDRLSNPAKLRAYALSEQLKEIMAPLFQKHMDDIISGEFSSGMMADWANDDKKLLTWREETGKTAFETAPQYEGKIGEQEYFDKGVLMIAMVKAGVELAFETMVDSGIIEESAYYESLHELPLIANTIARKRLYEMNVVISDTAEYGNYLFSYACVPLLKPFMAELQPGDLGKAIPEGAVDNGQLRDVNEAIRSHAIEQVGKKLRGYMTDMKRIAVAG.

The KARI N-terminal Rossmann domain maps to 15–208 (AQLGKCRFMG…GGHRAGVLES (194 aa)). Residues 45–48 (CGAQ), arginine 68, arginine 76, serine 78, and 108–110 (DKQ) each bind NADP(+). Histidine 132 is a catalytic residue. Position 158 (glycine 158) interacts with NADP(+). KARI C-terminal knotted domains follow at residues 209–344 (SFVA…TAPQ) and 345–484 (YEGK…MTDM). Aspartate 217, glutamate 221, glutamate 389, and glutamate 393 together coordinate Mg(2+). Residue serine 414 coordinates substrate.

Belongs to the ketol-acid reductoisomerase family. Mg(2+) serves as cofactor.

The enzyme catalyses (2R)-2,3-dihydroxy-3-methylbutanoate + NADP(+) = (2S)-2-acetolactate + NADPH + H(+). It catalyses the reaction (2R,3R)-2,3-dihydroxy-3-methylpentanoate + NADP(+) = (S)-2-ethyl-2-hydroxy-3-oxobutanoate + NADPH + H(+). The protein operates within amino-acid biosynthesis; L-isoleucine biosynthesis; L-isoleucine from 2-oxobutanoate: step 2/4. Its pathway is amino-acid biosynthesis; L-valine biosynthesis; L-valine from pyruvate: step 2/4. Involved in the biosynthesis of branched-chain amino acids (BCAA). Catalyzes an alkyl-migration followed by a ketol-acid reduction of (S)-2-acetolactate (S2AL) to yield (R)-2,3-dihydroxy-isovalerate. In the isomerase reaction, S2AL is rearranged via a Mg-dependent methyl migration to produce 3-hydroxy-3-methyl-2-ketobutyrate (HMKB). In the reductase reaction, this 2-ketoacid undergoes a metal-dependent reduction by NADPH to yield (R)-2,3-dihydroxy-isovalerate. This Escherichia coli (strain ATCC 8739 / DSM 1576 / NBRC 3972 / NCIMB 8545 / WDCM 00012 / Crooks) protein is Ketol-acid reductoisomerase (NADP(+)).